A 304-amino-acid polypeptide reads, in one-letter code: L-xylo-3-hexulose reductase (304 aa).

Isoleucine 19, aspartate 68, and asparagine 107 together coordinate NADP(+). Active-site proton donor residues include serine 163 and serine 164. Positions 177, 181, and 209 each coordinate NADP(+). Tyrosine 177 serves as the catalytic Proton acceptor. The active-site Lowers pKa of active site Tyr is lysine 181.

It belongs to the short-chain dehydrogenases/reductases (SDR) family.

The enzyme catalyses D-sorbitol + NADP(+) = L-xylo-3-hexulose + NADPH + H(+). It participates in carbohydrate degradation. In terms of biological role, L-xylulose reductase involved in the catabolism of D-galactose through an oxidoreductive pathway. Catalyzes the NADPH-dependent reduction of L-xylo-3-hexulose. Is also active with D-ribulose and L-xylulose, and to a lesser extent with D-xylulose, D-fructose and L- and D-sorbose. In the reverse reaction, shows activity with D-sorbitol and D-mannitol, low activity with xylitol, but no activity with galactitol, ribitol, and L- and D-arabitol. In Hypocrea jecorina (strain QM6a) (Trichoderma reesei), this protein is L-xylo-3-hexulose reductase.